The primary structure comprises 398 residues: Unsaturated chondroitin disaccharide hydrolase (398 aa).

The active-site Nucleophile is the aspartate 115. 8 residues coordinate substrate: aspartate 115, aspartate 175, glycine 233, threonine 235, arginine 247, tryptophan 251, serine 365, and serine 368. Residue aspartate 175 is the Proton donor of the active site.

This sequence belongs to the glycosyl hydrolase 88 family. In terms of assembly, monomer.

The catalysed reaction is beta-D-4-deoxy-Delta(4)-GlcpA-(1-&gt;3)-beta-D-GalpNAc6S + H2O = N-acetyl-beta-D-galactosamine 6-sulfate + 5-dehydro-4-deoxy-D-glucuronate. Its function is as follows. Catalyzes the hydrolysis of unsaturated hyaluronate and chondroitin disaccharides. Also degrades unsaturated heparin disaccharides. Releases 4-deoxy-4,5-didehydro D-glucuronic acid or 4-deoxy-4,5-didehydro L-iduronic acid from chondroitin disaccharides, hyaluronan disaccharides and heparin disaccharides and cleaves both glycosidic (1-&gt;3) and (1-&gt;4) bonds. Prefers sulfated glycosaminoglycans compared to unsulfated glycosaminoglycans. Probably required for mammalian cells invasion through the degradation of extracellular sulfated glycosaminoglycans such as chondroitin and hyaluronan. This is Unsaturated chondroitin disaccharide hydrolase from Streptococcus agalactiae serotype III (strain NEM316).